We begin with the raw amino-acid sequence, 178 residues long: Bifunctional protein PyrR (178 aa).

Positions V99–T111 match the PRPP-binding motif.

This sequence belongs to the purine/pyrimidine phosphoribosyltransferase family. PyrR subfamily. As to quaternary structure, homodimer and homohexamer; in equilibrium.

It carries out the reaction UMP + diphosphate = 5-phospho-alpha-D-ribose 1-diphosphate + uracil. Regulates transcriptional attenuation of the pyrimidine nucleotide (pyr) operon by binding in a uridine-dependent manner to specific sites on pyr mRNA. This disrupts an antiterminator hairpin in the RNA and favors formation of a downstream transcription terminator, leading to a reduced expression of downstream genes. Its function is as follows. Also displays a weak uracil phosphoribosyltransferase activity which is not physiologically significant. The protein is Bifunctional protein PyrR of Clostridium perfringens (strain ATCC 13124 / DSM 756 / JCM 1290 / NCIMB 6125 / NCTC 8237 / Type A).